The chain runs to 863 residues: Leucine--tRNA ligase (863 aa).

Residues Pro-41 to His-51 carry the 'HIGH' region motif. The 'KMSKS' region signature appears at Lys-627–Ser-631. Lys-630 is an ATP binding site.

This sequence belongs to the class-I aminoacyl-tRNA synthetase family.

Its subcellular location is the cytoplasm. The enzyme catalyses tRNA(Leu) + L-leucine + ATP = L-leucyl-tRNA(Leu) + AMP + diphosphate. The polypeptide is Leucine--tRNA ligase (Jannaschia sp. (strain CCS1)).